A 217-amino-acid polypeptide reads, in one-letter code: Adenylate kinase (217 aa).

Position 10–15 (10–15) interacts with ATP; sequence GAGKGT. The segment at 30–59 is NMP; sequence STGDMFRAAMKEETPLGLEAKSYIDKGELV. AMP contacts are provided by residues Thr-31, Arg-36, 57-59, 85-88, and Gln-92; these read ELV and GFPR. Positions 126 to 163 are LID; that stretch reads GRRICSVCGTTYHLVFNPPKTPGVCDKDGGDLYQRADD. Arg-127 is a binding site for ATP. Residues Cys-130 and Cys-133 each coordinate Zn(2+). 136–137 is an ATP binding site; that stretch reads TY. Cys-150 and Asp-153 together coordinate Zn(2+). Positions 160 and 171 each coordinate AMP. Gln-199 lines the ATP pocket.

It belongs to the adenylate kinase family. Monomer.

It is found in the cytoplasm. The enzyme catalyses AMP + ATP = 2 ADP. It functions in the pathway purine metabolism; AMP biosynthesis via salvage pathway; AMP from ADP: step 1/1. Catalyzes the reversible transfer of the terminal phosphate group between ATP and AMP. Plays an important role in cellular energy homeostasis and in adenine nucleotide metabolism. In Bacillus velezensis (strain DSM 23117 / BGSC 10A6 / LMG 26770 / FZB42) (Bacillus amyloliquefaciens subsp. plantarum), this protein is Adenylate kinase.